Here is a 448-residue protein sequence, read N- to C-terminus: Probable glucuronoxylan glucuronosyltransferase IRX7 (448 aa).

Residues 1 to 16 (MTTHKHRRTEKNLCFK) are Cytoplasmic-facing. The helical; Signal-anchor for type II membrane protein transmembrane segment at 17–37 (QYYKWILCFILTLYFFASFFV) threads the bilayer. At 38 to 448 (DHDQDHRSST…RSVRRSNSFL (411 aa)) the chain is on the lumenal side. N-linked (GlcNAc...) asparagine glycans are attached at residues Asn-157, Asn-189, Asn-287, Asn-397, and Asn-438.

The protein belongs to the glycosyltransferase 47 family. In terms of tissue distribution, expressed in developing interfascicular fibers and xylem cells in stems and developing secondary xylem in roots.

It is found in the golgi apparatus membrane. Functionally, involved in the synthesis of the hemicellulose glucuronoxylan, a major component of secondary cell walls. Probably involved in the synthesis of the glycosyl sequence at the glucuronoxylan reducing end. In Arabidopsis thaliana (Mouse-ear cress), this protein is Probable glucuronoxylan glucuronosyltransferase IRX7 (IRX7).